The chain runs to 1121 residues: Peroxisomal ATPase PEX1 (1121 aa).

Disordered stretches follow at residues 187-221 (SISS…NNGE) and 1099-1121 (SGRD…STLM). Over residues 205–217 (SSTSTATGRRSVT) the composition is skewed to low complexity.

The protein belongs to the AAA ATPase family. As to quaternary structure, interacts with PEX6; forming the PEX1-PEX6 AAA ATPase complex, which is composed of a heterohexamer formed by a trimer of PEX1-PEX6 dimers.

It localises to the membrane. The catalysed reaction is ATP + H2O = ADP + phosphate + H(+). Its function is as follows. Component of the PEX1-PEX6 AAA ATPase complex involved in peroxisome biosynthesis. The complex acts as a protein dislocase complex that mediates the ATP-dependent extraction of the PEX5 receptor from peroxisomal membranes, an essential step for PEX5 recycling. Specifically recognizes PEX5 monoubiquitinated at 'Cys-6', and pulls it out of the peroxisome lumen through the PEX2-PEX10-PEX12 retrotranslocation channel. Extraction by the PEX1-PEX6 AAA ATPase complex is accompanied by unfolding of the TPR repeats and release of bound cargo from PEX5. In Komagataella phaffii (strain GS115 / ATCC 20864) (Yeast), this protein is Peroxisomal ATPase PEX1.